Consider the following 464-residue polypeptide: Sensor protein IrlS (464 aa).

Residues 1–13 (MIRRLLPRTLRAR) are Periplasmic-facing. The chain crosses the membrane as a helical span at residues 14–34 (LTALIILSTAATLALSGVALY). Residues 35-166 (SALHNRLVGM…DHALLRAYAY (132 aa)) lie on the Cytoplasmic side of the membrane. Residues 167–187 (TVVVIEVLAVVLTAALAYGIA) traverse the membrane as a helical segment. The HAMP domain occupies 188–241 (MLGLSPLRRLVARAEQMSSSRLAQPLPELDTSGELKEMEHAFNAMLKRLDESFV). At 188–464 (MLGLSPLRRL…FWLKFPAHAA (277 aa)) the chain is on the periplasmic side. The Histidine kinase domain occupies 249–463 (NLAHDMRTPL…TFWLKFPAHA (215 aa)). Phosphohistidine; by autocatalysis is present on histidine 252.

Its subcellular location is the cell inner membrane. The enzyme catalyses ATP + protein L-histidine = ADP + protein N-phospho-L-histidine.. Its function is as follows. Member of the two-component regulatory system IrlR/IrlS. May be involved in invasion of eukaryotic cells and heavy-metal resistance. Probably activates IrlR by phosphorylation. This is Sensor protein IrlS (irlS) from Burkholderia pseudomallei (strain K96243).